A 170-amino-acid chain; its full sequence is Single-stranded DNA-binding protein (170 aa).

Positions 1-26 (MSNELKQVEQTEEAVVVSETKDYIKV) are oligomerization.

The protein belongs to the phi29likevirus single-strand-binding protein family. In terms of assembly, hexamer.

Functionally, single-stranded DNA-binding protein required for the elongation during viral DNA replication by strand displacement. Displaced viral DNA strands are transiently coated with the ssDNA-binding protein and therefore protected againt nucleases. The latter is then probably removed by the replisome that performs lagging strand synthesis or during the events that lead up to the recombination process. Has helix-destabilizing activity since it removes secondary structure from the ssDNA in replicative intermediates. The protein is Single-stranded DNA-binding protein of Bacillus subtilis (Bacteriophage GA-1).